Here is a 206-residue protein sequence, read N- to C-terminus: UPF0502 protein Acid_1185 (206 aa).

The protein belongs to the UPF0502 family.

This is UPF0502 protein Acid_1185 from Solibacter usitatus (strain Ellin6076).